A 62-amino-acid polypeptide reads, in one-letter code: Prokaryotic ubiquitin-like protein Pup 2 (62 aa).

The tract at residues 1-34 (MRQEKPKRHGREDDEPPEPAPAGRARDTTVGDDT) is disordered. The segment at 21 to 56 (PAGRARDTTVGDDTDELLDEIDGVLEENAVEFVRSY) is ARC ATPase binding. Residue Glu-62 forms an Isoglutamyl lysine isopeptide (Glu-Lys) (interchain with K-? in acceptor proteins) linkage.

Belongs to the prokaryotic ubiquitin-like protein family. Strongly interacts with the proteasome-associated ATPase ARC through a hydrophobic interface; the interacting region of Pup lies in its C-terminal half. There is one Pup binding site per ARC hexamer ring.

It participates in protein degradation; proteasomal Pup-dependent pathway. Protein modifier that is covalently attached to lysine residues of substrate proteins, thereby targeting them for proteasomal degradation. The tagging system is termed pupylation. The protein is Prokaryotic ubiquitin-like protein Pup 2 of Saccharopolyspora erythraea (strain ATCC 11635 / DSM 40517 / JCM 4748 / NBRC 13426 / NCIMB 8594 / NRRL 2338).